Reading from the N-terminus, the 206-residue chain is Large ribosomal subunit protein uL4 (206 aa).

This sequence belongs to the universal ribosomal protein uL4 family. Part of the 50S ribosomal subunit.

Functionally, one of the primary rRNA binding proteins, this protein initially binds near the 5'-end of the 23S rRNA. It is important during the early stages of 50S assembly. It makes multiple contacts with different domains of the 23S rRNA in the assembled 50S subunit and ribosome. In terms of biological role, forms part of the polypeptide exit tunnel. The sequence is that of Large ribosomal subunit protein uL4 from Bradyrhizobium sp. (strain ORS 278).